The chain runs to 218 residues: External core antigen (218 aa).

The signal sequence occupies residues methionine 1–glutamine 19. Residues glycine 26–leucine 28 are HBEAG. Positions arginine 180–serine 211 are enriched in basic residues. The segment at arginine 180–cysteine 218 is disordered. The 1; half-length repeat unit spans residues serine 190 to proline 196. Positions serine 190–glutamine 212 are 3 X 8 AA repeats of S-P-R-R-R-R-S-Q. Residues serine 190–cysteine 218 constitute a propeptide that is removed on maturation. Tandem repeats lie at residues serine 197–glutamine 204 and serine 205–glutamine 212.

Belongs to the orthohepadnavirus precore antigen family. As to quaternary structure, homodimerizes. In terms of processing, phosphorylated. Cleaved by host furin.

It localises to the secreted. The protein localises to the host nucleus. In terms of biological role, may regulate immune response to the intracellular capsid in acting as a T-cell tolerogen, by having an immunoregulatory effect which prevents destruction of infected cells by cytotoxic T-cells. This immune regulation may predispose to chronicity during perinatal infections and prevent severe liver injury during adult infections. The polypeptide is External core antigen (Marmota monax (Woodchuck)).